A 429-amino-acid chain; its full sequence is MFVDQVKIYVKAGNGGDGMVAFRREKFVPNGGPAGGDGGKGADVVFVVDEGLRTLVDFRFKRIFKAEHGEHGMSKSMHGRGAEDLVVKVPQGTIVKDIDTGEIIADLVAHGQRAVIAKAGRGGRGNKRFATPANPAPELSENGEPGQERNVQLELKVLADVGLVGFPSVGKSTLLSVVSAARPKIAAYHFTTIVPNLGMVDAGDGRSFVMADLPGLIEGASQGVGLGHQFLRHIERTRVIVHVIDMSGSEGRVPYEDYMAINNELEQYNLRLMERPQIIVANKMDMPDAEENLNEFKTKIAEDIPVFPISAVTKTGLRELLLAIADKLETTPEFPLNEILEQEDEDTVLYKYVAEEPDFEISREPDGTFVLSGAKIERLFTMTNFERDASISRFARQLRAMGVDEALRKRGAKDGDIVRLLDYEFEFMD.

One can recognise an Obg domain in the interval 1–158; it reads MFVDQVKIYV…RNVQLELKVL (158 aa). A disordered region spans residues 124-145; the sequence is RGNKRFATPANPAPELSENGEP. Residues 159 to 329 enclose the OBG-type G domain; it reads ADVGLVGFPS…LLLAIADKLE (171 aa). Residues 165 to 172, 190 to 194, 212 to 215, 282 to 285, and 310 to 312 each bind GTP; these read GFPSVGKS, FTTIV, DLPG, NKMD, and SAV. Positions 172 and 192 each coordinate Mg(2+). The OCT domain occupies 351–429; it reads KYVAEEPDFE…LLDYEFEFMD (79 aa).

This sequence belongs to the TRAFAC class OBG-HflX-like GTPase superfamily. OBG GTPase family. As to quaternary structure, monomer. Mg(2+) is required as a cofactor.

The protein localises to the cytoplasm. Its function is as follows. An essential GTPase which binds GTP, GDP and possibly (p)ppGpp with moderate affinity, with high nucleotide exchange rates and a fairly low GTP hydrolysis rate. Plays a role in control of the cell cycle, stress response, ribosome biogenesis and in those bacteria that undergo differentiation, in morphogenesis control. This is GTPase Obg from Listeria monocytogenes serotype 4b (strain F2365).